Here is an 85-residue protein sequence, read N- to C-terminus: UPF0291 protein SAK_0343 (85 aa).

A disordered region spans residues 58-85 (GNDVTPEKLRQVQREKGLHGRSLDDPNS). The segment covering 62-85 (TPEKLRQVQREKGLHGRSLDDPNS) has biased composition (basic and acidic residues).

Belongs to the UPF0291 family.

The protein localises to the cytoplasm. This chain is UPF0291 protein SAK_0343, found in Streptococcus agalactiae serotype Ia (strain ATCC 27591 / A909 / CDC SS700).